Reading from the N-terminus, the 846-residue chain is Rho GTPase-activating protein 12 (846 aa).

One can recognise an SH3 domain in the interval 12-74 (PGQVYIEVEY…PAQYVKEVTR (63 aa)). A compositionally biased stretch (polar residues) spans 152 to 175 (LTHNNGKFNNDSHSPKVSSQNRTR). Positions 152–241 (LTHNNGKFNN…PPNQGRPDSP (90 aa)) are disordered. Residues serine 165 and serine 176 each carry the phosphoserine modification. The span at 191–200 (TSFSQEQSCD) shows a compositional bias: polar residues. Residues serine 201, serine 213, and serine 215 each carry the phosphoserine modification. Residues 224–234 (TEQIRATTPPN) show a composition bias toward polar residues. Threonine 230 and threonine 231 each carry phosphothreonine. The residue at position 240 (serine 240) is a Phosphoserine. Position 243 is a phosphotyrosine (tyrosine 243). WW domains follow at residues 265–298 (IQINGEWETHKDSSGRCYYYNRGTQERTWKPPRW) and 358–391 (DYTNEKWLKHVDDQGRQYYYSADGSRSEWELPKY). The disordered stretch occupies residues 293–316 (WKPPRWTRDASISKGDFQNPGDQE). Disordered regions lie at residues 428–466 (DTNDKESPTASKPCFPENESSPSSPKHQDTASSPKDQEK) and 580–629 (ETDE…TKKN). Residues 445–461 (NESSPSSPKHQDTASSP) show a composition bias toward polar residues. One can recognise a PH domain in the interval 463-575 (DQEKYGLLNV…WFKVLSSTIN (113 aa)). The span at 580 to 590 (ETDEGIEEEIP) shows a compositional bias: acidic residues. Serine 592 is modified (phosphoserine). A compositionally biased stretch (basic and acidic residues) spans 594–609 (GIEKHDKEKEQKDPKK). Positions 656–844 (SNLANLCQRE…LILLELSSIF (189 aa)) constitute a Rho-GAP domain.

Functionally, GTPase activator for the Rho-type GTPases by converting them to an inactive GDP-bound state. In Homo sapiens (Human), this protein is Rho GTPase-activating protein 12 (ARHGAP12).